A 625-amino-acid polypeptide reads, in one-letter code: pH-response transcription factor pacC/RIM101 (625 aa).

The segment covering 1–34 has biased composition (low complexity); that stretch reads MSSQDQQQQQQPAQTQTSTSSSSNNENATTATSS. The segment at 1–35 is disordered; the sequence is MSSQDQQQQQQPAQTQTSTSSSSNNENATTATSSI. 3 C2H2-type zinc fingers span residues 45–70, 81–105, and 111–133; these read LLCQ…CEKH, LTCG…IRVH, and HKCE…VKTH. A compositionally biased stretch (polar residues) spans 391 to 416; the sequence is APMTATHSSHSVSSGTPALTPPSSSV. A disordered region spans residues 391-440; sequence APMTATHSSHSVSSGTPALTPPSSSVSYTSGNSPMSSSGMSPISRHSSTS. The segment covering 417 to 438 has biased composition (low complexity); it reads SYTSGNSPMSSSGMSPISRHSS. The YPX[LI] motif 1 motif lies at 444-447; it reads YPNL. Disordered stretches follow at residues 455-543 and 584-625; these read SPHH…SPSV and VKDE…DDDE. Composition is skewed to polar residues over residues 461–472 and 490–514; these read TAPTSTLGTNFD and GLNS…SPKE. A YPX[LI] motif 2 motif is present at residues 615-618; that stretch reads YPVL.

It belongs to the pacC/RIM101 family. In terms of processing, activated by C-terminal proteolytic cleavage by signaling protease (probably palB/RIM13) at neutral to alkaline ambient pH.

The protein resides in the cytoplasm. The protein localises to the nucleus. Functionally, transcription factor that mediates regulation of both acid- and alkaline-expressed genes in response to ambient pH. At alkaline ambient pH, activates transcription of alkaline-expressed genes (including pac1 itself) and represses transcription of acid-expressed genes. This Sclerotinia sclerotiorum (White mold) protein is pH-response transcription factor pacC/RIM101 (pac1).